Here is a 262-residue protein sequence, read N- to C-terminus: Phosphatidylserine decarboxylase proenzyme (262 aa).

Active-site charge relay system; for autoendoproteolytic cleavage activity residues include aspartate 86, histidine 142, and serine 226. Serine 226 (schiff-base intermediate with substrate; via pyruvic acid; for decarboxylase activity) is an active-site residue. A Pyruvic acid (Ser); by autocatalysis modification is found at serine 226.

This sequence belongs to the phosphatidylserine decarboxylase family. PSD-B subfamily. Prokaryotic type I sub-subfamily. Heterodimer of a large membrane-associated beta subunit and a small pyruvoyl-containing alpha subunit. Pyruvate is required as a cofactor. Post-translationally, is synthesized initially as an inactive proenzyme. Formation of the active enzyme involves a self-maturation process in which the active site pyruvoyl group is generated from an internal serine residue via an autocatalytic post-translational modification. Two non-identical subunits are generated from the proenzyme in this reaction, and the pyruvate is formed at the N-terminus of the alpha chain, which is derived from the carboxyl end of the proenzyme. The autoendoproteolytic cleavage occurs by a canonical serine protease mechanism, in which the side chain hydroxyl group of the serine supplies its oxygen atom to form the C-terminus of the beta chain, while the remainder of the serine residue undergoes an oxidative deamination to produce ammonia and the pyruvoyl prosthetic group on the alpha chain. During this reaction, the Ser that is part of the protease active site of the proenzyme becomes the pyruvoyl prosthetic group, which constitutes an essential element of the active site of the mature decarboxylase.

Its subcellular location is the cell membrane. It catalyses the reaction a 1,2-diacyl-sn-glycero-3-phospho-L-serine + H(+) = a 1,2-diacyl-sn-glycero-3-phosphoethanolamine + CO2. It functions in the pathway phospholipid metabolism; phosphatidylethanolamine biosynthesis; phosphatidylethanolamine from CDP-diacylglycerol: step 2/2. Functionally, catalyzes the formation of phosphatidylethanolamine (PtdEtn) from phosphatidylserine (PtdSer). This is Phosphatidylserine decarboxylase proenzyme from Bacillus anthracis.